A 943-amino-acid chain; its full sequence is AP-1 complex subunit beta-1 (943 aa).

Lysine 318 carries the N6-acetyllysine modification. The residue at position 574 (tyrosine 574) is a 3'-nitrotyrosine. Residues 584-621 (GGRGVVHKSLPPRTASSESTESPETAPAGAPAGDQPDV) are disordered. Positions 594-616 (PPRTASSESTESPETAPAGAPAG) are enriched in low complexity.

The protein belongs to the adaptor complexes large subunit family. Adaptor protein complex 1 (AP-1) is a heterotetramer composed of two large adaptins (gamma-type subunit AP1G1 and beta-type subunit AP1B1), a medium adaptin (mu-type subunit AP1M1 or AP1M2) and a small adaptin (sigma-type subunit AP1S1 or AP1S2 or AP1S3). Widely expressed.

Its subcellular location is the cytoplasmic vesicle. The protein localises to the clathrin-coated vesicle membrane. It localises to the golgi apparatus. Subunit of clathrin-associated adaptor protein complex 1 that plays a role in protein sorting in the late-Golgi/trans-Golgi network (TGN) and/or endosomes. The AP complexes mediate both the recruitment of clathrin to membranes and the recognition of sorting signals within the cytosolic tails of transmembrane cargo molecules. The chain is AP-1 complex subunit beta-1 (Ap1b1) from Mus musculus (Mouse).